The chain runs to 411 residues: Histidine--tRNA ligase (411 aa).

Belongs to the class-II aminoacyl-tRNA synthetase family. As to quaternary structure, homodimer.

The protein resides in the cytoplasm. It catalyses the reaction tRNA(His) + L-histidine + ATP = L-histidyl-tRNA(His) + AMP + diphosphate + H(+). The protein is Histidine--tRNA ligase of Dictyoglomus turgidum (strain DSM 6724 / Z-1310).